Here is a 310-residue protein sequence, read N- to C-terminus: Malate dehydrogenase (310 aa).

Residues 7–13 (GAAGGIG) and D34 contribute to the NAD(+) site. Residues R81 and R87 each coordinate substrate. Residues N94 and 117-119 (ITN) each bind NAD(+). The substrate site is built by N119 and R153. The active-site Proton acceptor is H177. M227 contacts NAD(+).

The protein belongs to the LDH/MDH superfamily. MDH type 1 family. In terms of assembly, homodimer.

It catalyses the reaction (S)-malate + NAD(+) = oxaloacetate + NADH + H(+). In terms of biological role, catalyzes the reversible oxidation of malate to oxaloacetate. This is Malate dehydrogenase from Vibrio vulnificus (strain CMCP6).